We begin with the raw amino-acid sequence, 372 residues long: Aminomethyltransferase (372 aa).

It belongs to the GcvT family. The glycine cleavage system is composed of four proteins: P, T, L and H.

It carries out the reaction N(6)-[(R)-S(8)-aminomethyldihydrolipoyl]-L-lysyl-[protein] + (6S)-5,6,7,8-tetrahydrofolate = N(6)-[(R)-dihydrolipoyl]-L-lysyl-[protein] + (6R)-5,10-methylene-5,6,7,8-tetrahydrofolate + NH4(+). In terms of biological role, the glycine cleavage system catalyzes the degradation of glycine. The protein is Aminomethyltransferase of Prochlorococcus marinus (strain NATL1A).